Consider the following 236-residue polypeptide: Ubiquinone biosynthesis O-methyltransferase (236 aa).

S-adenosyl-L-methionine-binding residues include R40, G59, D80, and L124.

The protein belongs to the methyltransferase superfamily. UbiG/COQ3 family.

It catalyses the reaction a 3-demethylubiquinol + S-adenosyl-L-methionine = a ubiquinol + S-adenosyl-L-homocysteine + H(+). It carries out the reaction a 3-(all-trans-polyprenyl)benzene-1,2-diol + S-adenosyl-L-methionine = a 2-methoxy-6-(all-trans-polyprenyl)phenol + S-adenosyl-L-homocysteine + H(+). Its pathway is cofactor biosynthesis; ubiquinone biosynthesis. O-methyltransferase that catalyzes the 2 O-methylation steps in the ubiquinone biosynthetic pathway. This is Ubiquinone biosynthesis O-methyltransferase from Saccharophagus degradans (strain 2-40 / ATCC 43961 / DSM 17024).